The chain runs to 41 residues: Large ribosomal subunit protein bL36 (41 aa).

It belongs to the bacterial ribosomal protein bL36 family.

This chain is Large ribosomal subunit protein bL36, found in Nitrobacter winogradskyi (strain ATCC 25391 / DSM 10237 / CIP 104748 / NCIMB 11846 / Nb-255).